A 545-amino-acid polypeptide reads, in one-letter code: Membrane protein insertase YidC (545 aa).

A helical membrane pass occupies residues Ile-8–Lys-28. Residues Pro-31–Glu-69 are disordered. Residues Pro-38–Ala-59 show a composition bias toward low complexity. 5 helical membrane-spanning segments follow: residues Ile-325–Met-345, Trp-355–Tyr-375, Leu-421–Leu-441, Leu-458–Met-478, and Phe-497–Ile-517.

Belongs to the OXA1/ALB3/YidC family. Type 1 subfamily. In terms of assembly, interacts with the Sec translocase complex via SecD. Specifically interacts with transmembrane segments of nascent integral membrane proteins during membrane integration.

It localises to the cell inner membrane. Functionally, required for the insertion and/or proper folding and/or complex formation of integral membrane proteins into the membrane. Involved in integration of membrane proteins that insert both dependently and independently of the Sec translocase complex, as well as at least some lipoproteins. Aids folding of multispanning membrane proteins. In Anaeromyxobacter dehalogenans (strain 2CP-C), this protein is Membrane protein insertase YidC.